A 176-amino-acid polypeptide reads, in one-letter code: Inner membrane-spanning protein YciB (176 aa).

A run of 5 helical transmembrane segments spans residues 22-42 (IYYASGALIVASALVLVYTWL), 50-70 (VALITFVLVAIFGSLTLYYHN), 81-101 (IYSLFAAALLISQFVFGKPLI), 121-141 (IAWALFFLACGAANIYIAFWL), and 149-169 (FKVFGLTGLTLVFTLLSGIYI).

Belongs to the YciB family.

The protein localises to the cell inner membrane. Plays a role in cell envelope biogenesis, maintenance of cell envelope integrity and membrane homeostasis. The protein is Inner membrane-spanning protein YciB of Sodalis glossinidius (strain morsitans).